The following is a 79-amino-acid chain: uncharacterized protein (79 aa).

This is an uncharacterized protein from Helicobacter pylori (strain ATCC 700392 / 26695) (Campylobacter pylori).